A 567-amino-acid chain; its full sequence is Inactive protein kinase SELMODRAFT_444075 (567 aa).

Residues 148–206 (NETRRKGPSPSEVLNSTTSSPASHKPQVLNDFLRMKESREYTEETDTQRNVSRPVDRVS) are disordered. The segment covering 159 to 169 (EVLNSTTSSPA) has biased composition (polar residues). The span at 180–189 (LRMKESREYT) shows a compositional bias: basic and acidic residues. Positions 196-206 (RNVSRPVDRVS) are enriched in low complexity. The region spanning 255–487 (FSDVNFLAEG…EGDSLSDTSL (233 aa)) is the Protein kinase domain. Residues 261 to 269 (LAEGGYGSV) and lysine 283 contribute to the ATP site. Over residues 511-538 (DSSSSRSSSASSVLKSFSRTQHSSRSSS) the composition is skewed to low complexity. The tract at residues 511–567 (DSSSSRSSSASSVLKSFSRTQHSSRSSSNAGSPLNPAATQALAFKKYNKNTTRHTQD) is disordered. The span at 556-567 (KYNKNTTRHTQD) shows a compositional bias: basic residues.

The polypeptide is Inactive protein kinase SELMODRAFT_444075 (Selaginella moellendorffii (Spikemoss)).